The sequence spans 256 residues: 5'-nucleotidase SurE (256 aa).

Residues Asp8, Asp9, Ser40, and Asn92 each coordinate a divalent metal cation.

This sequence belongs to the SurE nucleotidase family. Requires a divalent metal cation as cofactor.

The protein resides in the cytoplasm. It catalyses the reaction a ribonucleoside 5'-phosphate + H2O = a ribonucleoside + phosphate. In terms of biological role, nucleotidase that shows phosphatase activity on nucleoside 5'-monophosphates. This chain is 5'-nucleotidase SurE, found in Rhizobium meliloti (strain 1021) (Ensifer meliloti).